Here is a 1260-residue protein sequence, read N- to C-terminus: Myosin-1 (1260 aa).

Positions 34–713 (VGVSDLTLLS…TLFALEHMRD (680 aa)) constitute a Myosin motor domain. 127 to 134 (GESGAGKT) contacts ATP. S355 is modified (phosphoserine). The tract at residues 402–484 (SIGILDIYGF…PGIFATLDDS (83 aa)) is actin-binding. IQ domains lie at 717–737 (YNMAARIQRAWRRFIQRRIDS) and 738–763 (AIKIQRAIREKKGGNQYEQLRDYGHR). In terms of domain architecture, TH1 spans 769–959 (KERRAMSLLG…TISVRQGRPA (191 aa)). Polar residues-rich tracts occupy residues 948–963 (SSTISVRQGRPANSRQ) and 972–988 (TLLSDGPSYNSNQSKGY). The segment at 948-1106 (SSTISVRQGR…PPPPTKQNIP (159 aa)) is disordered. Residues 989-1013 (GQQQHAQPSYGQQQQQQQRYAPQSH) show a composition bias toward low complexity. The span at 1030–1064 (QQNFAASAAQTAYHPQQASHARVPSTNNAHTQHNR) shows a compositional bias: polar residues. The segment covering 1065–1082 (QPAQQAAQPVQQAAQPAA) has biased composition (low complexity). Pro residues predominate over residues 1092-1101 (APPPPPPPPT). An SH3 domain is found at 1103–1165 (QNIPKFQAAY…PTNYIVEYKE (63 aa)).

Belongs to the TRAFAC class myosin-kinesin ATPase superfamily. Myosin family. Post-translationally, phosphorylation of the TEDS site (Ser-355) is required for the polarization of the actin cytoskeleton. Phosphorylation probably activates the myosin-I ATPase activity.

Its subcellular location is the cytoplasm. The protein localises to the cytoskeleton. It localises to the actin patch. Type-I myosin implicated in the organization of the actin cytoskeleton. Required for proper actin cytoskeleton polarization. At the cell cortex, assembles in patch-like structures together with proteins from the actin-polymerizing machinery and promotes actin assembly. Functions as actin nucleation-promoting factor (NPF) for the Arp2/3 complex. In Kluyveromyces lactis (strain ATCC 8585 / CBS 2359 / DSM 70799 / NBRC 1267 / NRRL Y-1140 / WM37) (Yeast), this protein is Myosin-1 (MYO1).